The sequence spans 379 residues: Phospholipase A1 (379 aa).

Positions 1–20 (MKFITAILVIFCVYLLSTAG) are cleaved as a signal peptide. Residues 21 to 73 (DSKILPLKKLPSKIFGHLKSHVDNTVKKPLKVFGHLKSHVENSVGPLRMNKLT) constitute a propeptide that is removed on maturation. C76 and C154 are disulfide-bonded. N126 carries an N-linked (GlcNAc...) asparagine glycan. S204 (nucleophile) is an active-site residue. D232 (charge relay system) is an active-site residue. 2 disulfide bridges follow: C243/C248 and C285/C291. Residue H293 is the Charge relay system of the active site.

Belongs to the AB hydrolase superfamily. Lipase family. In terms of processing, contains five disulfide bonds. As to expression, expressed by the venom gland.

It localises to the secreted. The catalysed reaction is a 1,2-diacyl-sn-glycero-3-phosphocholine + H2O = a 2-acyl-sn-glycero-3-phosphocholine + a fatty acid + H(+). Functionally, catalyzes the hydrolysis of phosphatidylcholine with phospholipase A1 activity. May act as an allergen and induce hemolytic activity. This chain is Phospholipase A1, found in Dinoponera quadriceps (South American ant).